The primary structure comprises 314 residues: Mycothiol acetyltransferase (314 aa).

2 consecutive N-acetyltransferase domains span residues 18 to 156 (ATIR…RPLA) and 168 to 314 (IRIA…MYQL). Residue Glu-38 participates in 1D-myo-inositol 2-(L-cysteinylamino)-2-deoxy-alpha-D-glucopyranoside binding. 92 to 94 (VVV) provides a ligand contact to acetyl-CoA. 1D-myo-inositol 2-(L-cysteinylamino)-2-deoxy-alpha-D-glucopyranoside-binding residues include Glu-195, Lys-234, and Glu-248. Acetyl-CoA contacts are provided by residues 252 to 254 (VGL) and 259 to 265 (QGHGLGR). Tyr-286 contacts 1D-myo-inositol 2-(L-cysteinylamino)-2-deoxy-alpha-D-glucopyranoside.

The protein belongs to the acetyltransferase family. MshD subfamily. Monomer.

The enzyme catalyses 1D-myo-inositol 2-(L-cysteinylamino)-2-deoxy-alpha-D-glucopyranoside + acetyl-CoA = mycothiol + CoA + H(+). Its function is as follows. Catalyzes the transfer of acetyl from acetyl-CoA to desacetylmycothiol (Cys-GlcN-Ins) to form mycothiol. This is Mycothiol acetyltransferase from Catenulispora acidiphila (strain DSM 44928 / JCM 14897 / NBRC 102108 / NRRL B-24433 / ID139908).